Reading from the N-terminus, the 123-residue chain is MADLAKIVEDLSNLTVLEAAELSKLLEEKWGVSAAAPVAVAAVAGAAAPVAEEKTEFDVILVEGGAQKINVIKEVRALTGLGLKEAKDLVEGAPKPIKEGASKDEAEKIKSQLEAAGAKVELK.

This sequence belongs to the bacterial ribosomal protein bL12 family. In terms of assembly, homodimer. Part of the ribosomal stalk of the 50S ribosomal subunit. Forms a multimeric L10(L12)X complex, where L10 forms an elongated spine to which 2 to 4 L12 dimers bind in a sequential fashion. Binds GTP-bound translation factors.

Its function is as follows. Forms part of the ribosomal stalk which helps the ribosome interact with GTP-bound translation factors. Is thus essential for accurate translation. This chain is Large ribosomal subunit protein bL12, found in Bartonella henselae (strain ATCC 49882 / DSM 28221 / CCUG 30454 / Houston 1) (Rochalimaea henselae).